Here is a 332-residue protein sequence, read N- to C-terminus: Biotin synthase (332 aa).

A Radical SAM core domain is found at 53–282; sequence HFGKKVKLNM…TKEIRISGGR (230 aa). 3 residues coordinate [4Fe-4S] cluster: Cys-71, Cys-75, and Cys-78. The [2Fe-2S] cluster site is built by Cys-115, Cys-147, Cys-207, and Arg-277.

Belongs to the radical SAM superfamily. Biotin synthase family. In terms of assembly, homodimer. [4Fe-4S] cluster serves as cofactor. It depends on [2Fe-2S] cluster as a cofactor.

It catalyses the reaction (4R,5S)-dethiobiotin + (sulfur carrier)-SH + 2 reduced [2Fe-2S]-[ferredoxin] + 2 S-adenosyl-L-methionine = (sulfur carrier)-H + biotin + 2 5'-deoxyadenosine + 2 L-methionine + 2 oxidized [2Fe-2S]-[ferredoxin]. Its pathway is cofactor biosynthesis; biotin biosynthesis; biotin from 7,8-diaminononanoate: step 2/2. Catalyzes the conversion of dethiobiotin (DTB) to biotin by the insertion of a sulfur atom into dethiobiotin via a radical-based mechanism. This is Biotin synthase from Bacillus mycoides (strain KBAB4) (Bacillus weihenstephanensis).